The following is an 85-amino-acid chain: Cell division protein ZapA (85 aa).

Residues 60–85 adopt a coiled-coil conformation; that stretch reads AVNVVHDYLKLKEELERLKGQIKEKD.

Belongs to the ZapA family. Type 2 subfamily. As to quaternary structure, homodimer. Interacts with FtsZ.

It is found in the cytoplasm. In terms of biological role, activator of cell division through the inhibition of FtsZ GTPase activity, therefore promoting FtsZ assembly into bundles of protofilaments necessary for the formation of the division Z ring. It is recruited early at mid-cell but it is not essential for cell division. In Bacillus licheniformis (strain ATCC 14580 / DSM 13 / JCM 2505 / CCUG 7422 / NBRC 12200 / NCIMB 9375 / NCTC 10341 / NRRL NRS-1264 / Gibson 46), this protein is Cell division protein ZapA.